The primary structure comprises 671 residues: Polyadenylate-binding protein 8 (671 aa).

4 consecutive RRM domains span residues 45-123, 133-210, 224-301, and 327-404; these read TSLY…YSVR, GNIF…PFVH, TNVY…KAQK, and SNLY…LAQR. The segment at 467–526 is disordered; that stretch reads LVPGMRPGGSPMPNFFMPMMQQGQQQQQQQQQQQRPGGGRRGALPQPQQPSPMMQQQMHP. 2 stretches are compositionally biased toward low complexity: residues 483–501 and 508–525; these read MPMM…QQQR and GALP…QQMH. Residues 573–650 enclose the PABC domain; sequence PIVALATRLA…AMDVLRSVAQ (78 aa).

Belongs to the polyadenylate-binding protein type-1 family. As to quaternary structure, interacts with ERD15/CID1. Interacts with Turnip mosaic virus (TuMV) VPg-Pro and RNA-dependent RNA polymerase (RdRp). In terms of tissue distribution, expressed predominantly in immature flowers.

The protein resides in the cytoplasm. The protein localises to the nucleus. Its function is as follows. Binds the poly(A) tail of mRNA. Appears to be an important mediator of the multiple roles of the poly(A) tail in mRNA biogenesis, stability and translation. During infection with potyvirus TuMV, acts as a potential integral component of the viral replicase complex that could play an important role in the regulation of potyviral RNA-dependent RNA polymerase (RdRp). This Arabidopsis thaliana (Mouse-ear cress) protein is Polyadenylate-binding protein 8 (PAB8).